The sequence spans 326 residues: D-amino-acid oxidase (326 aa).

Positions 18, 19, 46, 47, 48, 52, 53, 162, and 179 each coordinate FAD. Residues Tyr-222 and Arg-277 each contribute to the D-proline site. Residues Tyr-222 and Arg-277 each contribute to the D-serine site. FAD-binding residues include Arg-277, Gly-303, Gly-304, Gly-306, and Thr-308. Gly-304 serves as a coordination point for D-proline. Gly-304 contacts D-serine.

Belongs to the DAMOX/DASOX family. In terms of assembly, monomer. The cofactor is FAD.

It is found in the cytoplasm. The protein localises to the secreted. Its subcellular location is the cell wall. It carries out the reaction a D-alpha-amino acid + O2 + H2O = a 2-oxocarboxylate + H2O2 + NH4(+). The enzyme catalyses D-valine + O2 + H2O = 3-methyl-2-oxobutanoate + H2O2 + NH4(+). It catalyses the reaction D-leucine + O2 + H2O = 4-methyl-2-oxopentanoate + H2O2 + NH4(+). The catalysed reaction is D-isoleucine + O2 + H2O = (R)-3-methyl-2-oxopentanoate + H2O2 + NH4(+). It carries out the reaction D-tyrosine + O2 + H2O = 3-(4-hydroxyphenyl)pyruvate + H2O2 + NH4(+). The enzyme catalyses D-threonine + O2 + H2O = (S)-3-hydroxy-2-oxobutanoate + H2O2 + NH4(+). With respect to regulation, inhibited by benzoate and phenylmethylsulfonyl fluoride (PMSF). Weakly inhibited by anthranilate, crotonate, and the amino acid-modifying agents dithionitrobenzoic acid and diethyl pyrocarbonate. Not inhibited by malonate, meso-tartrate, D-malate, or the amino acid-modifying agents iodoacetic acid or butane-2,3-dione. In terms of biological role, catalyzes the oxidative deamination of D-amino acids with broad substrate specificity. This Rubrobacter xylanophilus (strain DSM 9941 / JCM 11954 / NBRC 16129 / PRD-1) protein is D-amino-acid oxidase.